We begin with the raw amino-acid sequence, 490 residues long: NAD/NADP-dependent betaine aldehyde dehydrogenase (490 aa).

K(+)-binding residues include Thr26, Ile27, and Asp93. 150-153 (GAWN) is an NADPH binding site. Lys162 functions as the Charge relay system in the catalytic mechanism. Residue 176–179 (KPSE) coordinates NADPH. Residue Val180 coordinates K(+). Residues Gly209 and 230–233 (GTST) each bind NADPH. Leu246 contributes to the K(+) binding site. Glu252 serves as the catalytic Proton acceptor. The NADPH site is built by Cys286 and Glu387. Cys286 functions as the Nucleophile in the catalytic mechanism. Cys286 carries the post-translational modification Cysteine sulfenic acid (-SOH). K(+)-binding residues include Lys457 and Gly460. Residue Glu464 is the Charge relay system of the active site.

It belongs to the aldehyde dehydrogenase family. Dimer of dimers. The cofactor is K(+).

It catalyses the reaction betaine aldehyde + NAD(+) + H2O = glycine betaine + NADH + 2 H(+). The enzyme catalyses betaine aldehyde + NADP(+) + H2O = glycine betaine + NADPH + 2 H(+). It functions in the pathway amine and polyamine biosynthesis; betaine biosynthesis via choline pathway; betaine from betaine aldehyde: step 1/1. Its function is as follows. Involved in the biosynthesis of the osmoprotectant glycine betaine. Catalyzes the irreversible oxidation of betaine aldehyde to the corresponding acid. In P.aeruginosa this reaction is a compulsory step in the assimilation of carbon and nitrogen when bacteria are growing in choline or choline precursors. Can use NADP(+) with similar efficiency to NAD(+), a property that can be used by the bacterium to produce the NADPH needed to combat the oxidative stress imposed by the host defenses. In Pseudomonas aeruginosa (strain ATCC 15692 / DSM 22644 / CIP 104116 / JCM 14847 / LMG 12228 / 1C / PRS 101 / PAO1), this protein is NAD/NADP-dependent betaine aldehyde dehydrogenase.